A 262-amino-acid chain; its full sequence is Flap endonuclease Xni (262 aa).

Residue Asp-109 coordinates Mg(2+). One can recognise a 5'-3' exonuclease domain in the interval 165 to 255 (LKPEQLADYW…FNLQDIRYEK (91 aa)). Residues Leu-176, Ala-177, Ile-187, and Val-190 each contribute to the K(+) site. An interaction with DNA region spans residues 189-194 (GVGPKA).

Belongs to the Xni family. The cofactor is Mg(2+). K(+) is required as a cofactor.

Functionally, has flap endonuclease activity. During DNA replication, flap endonucleases cleave the 5'-overhanging flap structure that is generated by displacement synthesis when DNA polymerase encounters the 5'-end of a downstream Okazaki fragment. This chain is Flap endonuclease Xni, found in Aliivibrio fischeri (strain MJ11) (Vibrio fischeri).